The following is a 767-amino-acid chain: Ribonucleoside-diphosphate reductase large subunit (767 aa).

Residues T176, 191-192, G222, 392-396, and 578-582 contribute to the substrate site; these read SC, NLCAE, and PTAGT. Cysteines 192 and 408 form a disulfide. The active-site Proton acceptor is the N392. C394 acts as the Cysteine radical intermediate in catalysis. E396 acts as the Proton acceptor in catalysis.

The protein belongs to the ribonucleoside diphosphate reductase large chain family. In terms of assembly, heterotetramer composed of a homodimer of the large subunit (R1) and a homodimer of the small subunit (R2). Larger multisubunit protein complex are also active, composed of (R1)n(R2)n.

It carries out the reaction a 2'-deoxyribonucleoside 5'-diphosphate + [thioredoxin]-disulfide + H2O = a ribonucleoside 5'-diphosphate + [thioredoxin]-dithiol. In terms of biological role, ribonucleoside-diphosphate reductase holoenzyme provides the precursors necessary for viral DNA synthesis. Allows virus growth in non-dividing cells, as well as reactivation from latency in infected hosts. Catalyzes the biosynthesis of deoxyribonucleotides from the corresponding ribonucleotides. This is Ribonucleoside-diphosphate reductase large subunit from Saimiri sciureus (Common squirrel monkey).